We begin with the raw amino-acid sequence, 79 residues long: D-alanyl carrier protein (79 aa).

The region spanning methionine 1 to valine 76 is the Carrier domain. Position 34 is an O-(pantetheine 4'-phosphoryl)serine (serine 34).

The protein belongs to the DltC family. In terms of processing, 4'-phosphopantetheine is transferred from CoA to a specific serine of apo-DCP.

It localises to the cytoplasm. It functions in the pathway cell wall biogenesis; lipoteichoic acid biosynthesis. Its function is as follows. Carrier protein involved in the D-alanylation of lipoteichoic acid (LTA). The loading of thioester-linked D-alanine onto DltC is catalyzed by D-alanine--D-alanyl carrier protein ligase DltA. The DltC-carried D-alanyl group is further transferred to cell membrane phosphatidylglycerol (PG) by forming an ester bond, probably catalyzed by DltD. D-alanylation of LTA plays an important role in modulating the properties of the cell wall in Gram-positive bacteria, influencing the net charge of the cell wall. In Abiotrophia defectiva (Streptococcus defectivus), this protein is D-alanyl carrier protein.